We begin with the raw amino-acid sequence, 182 residues long: Lipid A acyltransferase PagP (182 aa).

Positions 1-21 (MTQYFRSLAFFLLPVPATAMA) are cleaved as a signal peptide. Residue C22 is the site of N-palmitoyl cysteine attachment. Residue C22 is the site of S-diacylglycerol cysteine attachment. Residues H55, D98, and S99 contribute to the active site.

The protein belongs to the lipid A palmitoyltransferase family. As to quaternary structure, homodimer.

The protein resides in the cell outer membrane. The catalysed reaction is a lipid A + a 1,2-diacyl-sn-glycero-3-phosphocholine = a hepta-acyl lipid A + a 2-acyl-sn-glycero-3-phosphocholine. The enzyme catalyses a lipid IVA + a 1,2-diacyl-sn-glycero-3-phosphocholine = a lipid IVB + a 2-acyl-sn-glycero-3-phosphocholine. It carries out the reaction a lipid IIA + a 1,2-diacyl-sn-glycero-3-phosphocholine = a lipid IIB + a 2-acyl-sn-glycero-3-phosphocholine. Transfers a fatty acid residue from the sn-1 position of a phospholipid to the N-linked hydroxyfatty acid chain on the proximal unit of lipid A or its precursors. This is Lipid A acyltransferase PagP from Bordetella pertussis (strain CS).